The chain runs to 145 residues: MDQQIRLVEAKYKKEAILPFEIGDTVKVWVKIIEGDRERLQAYEGTVISIRGKGINKSFIVRKISYGVGVERIFLLNSPRIDHVDIIRKAKVRRAKLYYLRNKVGKKARLVERLGVKIPKHSDLIKNTTEENASAAEENNSSSAE.

Belongs to the bacterial ribosomal protein bL19 family.

Its function is as follows. This protein is located at the 30S-50S ribosomal subunit interface and may play a role in the structure and function of the aminoacyl-tRNA binding site. The polypeptide is Large ribosomal subunit protein bL19 (Brachyspira hyodysenteriae (strain ATCC 49526 / WA1)).